The following is a 525-amino-acid chain: 2-isopropylmalate synthase (525 aa).

The Pyruvate carboxyltransferase domain occupies 5–267 (VIIFDTTLRD…HTGIHHQEIY (263 aa)). Residues Asp-14, His-202, His-204, and Asn-238 each contribute to the Mn(2+) site. The regulatory domain stretch occupies residues 392-525 (RLEYFSVQSS…NNSQDMQETV (134 aa)).

Belongs to the alpha-IPM synthase/homocitrate synthase family. LeuA type 1 subfamily. As to quaternary structure, homodimer. The cofactor is Mn(2+).

Its subcellular location is the cytoplasm. The catalysed reaction is 3-methyl-2-oxobutanoate + acetyl-CoA + H2O = (2S)-2-isopropylmalate + CoA + H(+). It functions in the pathway amino-acid biosynthesis; L-leucine biosynthesis; L-leucine from 3-methyl-2-oxobutanoate: step 1/4. Functionally, catalyzes the condensation of the acetyl group of acetyl-CoA with 3-methyl-2-oxobutanoate (2-ketoisovalerate) to form 3-carboxy-3-hydroxy-4-methylpentanoate (2-isopropylmalate). In Sodalis glossinidius (strain morsitans), this protein is 2-isopropylmalate synthase.